We begin with the raw amino-acid sequence, 275 residues long: Exosome complex component Rrp42 (275 aa).

Belongs to the RNase PH family. Rrp42 subfamily. As to quaternary structure, component of the archaeal exosome complex. Forms a hexameric ring-like arrangement composed of 3 Rrp41-Rrp42 heterodimers. The hexameric ring associates with a trimer of Rrp4 and/or Csl4 subunits.

Its subcellular location is the cytoplasm. Its function is as follows. Non-catalytic component of the exosome, which is a complex involved in RNA degradation. Contributes to the structuring of the Rrp41 active site. This Saccharolobus islandicus (strain M.16.27) (Sulfolobus islandicus) protein is Exosome complex component Rrp42.